We begin with the raw amino-acid sequence, 215 residues long: Pyridoxine/pyridoxamine 5'-phosphate oxidase (215 aa).

Substrate contacts are provided by residues 9-12 (RRDY) and lysine 69. Residues 64-69 (RILLLK), 79-80 (FT), lysine 86, and glutamine 108 contribute to the FMN site. Substrate contacts are provided by tyrosine 126, arginine 130, and serine 134. Residues 143-144 (QS) and tryptophan 188 each bind FMN. A substrate-binding site is contributed by 194–196 (RLH). Residue arginine 198 participates in FMN binding.

The protein belongs to the pyridoxamine 5'-phosphate oxidase family. Homodimer. FMN is required as a cofactor.

It carries out the reaction pyridoxamine 5'-phosphate + O2 + H2O = pyridoxal 5'-phosphate + H2O2 + NH4(+). It catalyses the reaction pyridoxine 5'-phosphate + O2 = pyridoxal 5'-phosphate + H2O2. It functions in the pathway cofactor metabolism; pyridoxal 5'-phosphate salvage; pyridoxal 5'-phosphate from pyridoxamine 5'-phosphate: step 1/1. The protein operates within cofactor metabolism; pyridoxal 5'-phosphate salvage; pyridoxal 5'-phosphate from pyridoxine 5'-phosphate: step 1/1. Its function is as follows. Catalyzes the oxidation of either pyridoxine 5'-phosphate (PNP) or pyridoxamine 5'-phosphate (PMP) into pyridoxal 5'-phosphate (PLP). The protein is Pyridoxine/pyridoxamine 5'-phosphate oxidase of Pseudomonas fluorescens (strain ATCC BAA-477 / NRRL B-23932 / Pf-5).